The chain runs to 279 residues: Ethanolamine utilization protein EutJ (279 aa).

Belongs to the EutJ family.

The protein operates within amine and polyamine degradation; ethanolamine degradation. Its function is as follows. May protect ethanolamine ammonia-lyase (EAL, eutB-eutC) from inhibition, may function in assembling the bacterial microcompartment and/or in refolding EAL, suggesting it may have chaperone activity. Overexpression of eutJ and eutS in E.coli leads to multiple BMC-like structures; eutS expression alone leads to 1 BMC-like structure per cell. In terms of biological role, expression of the eut operon allows this bacteria to use ethanolamine (EA) as a carbon, nitrogen and energy source. It relies on cobalamin (vitamin B12) both as a cofactor for the ethanolamine ammonia-lyase (EAL) activity and to induce the operon. EA enhances bacterial survival in macrophages in a concentration-dependent manner, suggesting it is an important nutrient during infection. This Salmonella typhimurium (strain LT2 / SGSC1412 / ATCC 700720) protein is Ethanolamine utilization protein EutJ.